Reading from the N-terminus, the 149-residue chain is Nucleoside diphosphate kinase (149 aa).

ATP contacts are provided by lysine 9, phenylalanine 57, arginine 85, threonine 91, arginine 102, and asparagine 112. The active-site Pros-phosphohistidine intermediate is histidine 115.

The protein belongs to the NDK family. Requires Mg(2+) as cofactor.

It localises to the cytoplasm. The enzyme catalyses a 2'-deoxyribonucleoside 5'-diphosphate + ATP = a 2'-deoxyribonucleoside 5'-triphosphate + ADP. It catalyses the reaction a ribonucleoside 5'-diphosphate + ATP = a ribonucleoside 5'-triphosphate + ADP. Its function is as follows. Major role in the synthesis of nucleoside triphosphates other than ATP. The ATP gamma phosphate is transferred to the NDP beta phosphate via a ping-pong mechanism, using a phosphorylated active-site intermediate. This chain is Nucleoside diphosphate kinase, found in Methanoculleus marisnigri (strain ATCC 35101 / DSM 1498 / JR1).